We begin with the raw amino-acid sequence, 576 residues long: Urease subunit alpha (576 aa).

A Urease domain is found at 132 to 576 (GGVDTHIHFI…LPMAQRYFLF (445 aa)). His-137, His-139, and Lys-220 together coordinate Ni(2+). Lys-220 is modified (N6-carboxylysine). Residue His-222 participates in substrate binding. 2 residues coordinate Ni(2+): His-249 and His-275. His-323 (proton donor) is an active-site residue. Residue Asp-363 coordinates Ni(2+).

The protein belongs to the metallo-dependent hydrolases superfamily. Urease alpha subunit family. In terms of assembly, heterotrimer of UreA (gamma), UreB (beta) and UreC (alpha) subunits. Three heterotrimers associate to form the active enzyme. It depends on Ni cation as a cofactor. Post-translationally, carboxylation allows a single lysine to coordinate two nickel ions.

It localises to the cytoplasm. The catalysed reaction is urea + 2 H2O + H(+) = hydrogencarbonate + 2 NH4(+). Its pathway is nitrogen metabolism; urea degradation; CO(2) and NH(3) from urea (urease route): step 1/1. The sequence is that of Urease subunit alpha from Arthrobacter sp. (strain FB24).